The chain runs to 479 residues: Ankyrin repeat, SAM and basic leucine zipper domain-containing protein 1 (479 aa).

Serine 22 and serine 24 each carry phosphoserine. ANK repeat units lie at residues 49-78 (EKNETFKKALTTGDILLVKELLNSGISVDS), 82-111 (YGWTPLMYAASVSNVELVRVLLDRGANASF), 114-148 (DKQTILITACSARGSEEQILKCVELLLSRNADPNV), 152-181 (RLMTPIMYAARDGHTQVVALLVAHGAEVNT), 185-214 (NGYTALTWAARQGHKNVVLKLLELGANKML), and 218-247 (DGKTPSEIAKRNKHVEIFSFLSLTLNPLEG). An SAM domain is found at 276-338 (SYTALGDLEI…KILDALKELQ (63 aa)).

In terms of assembly, interacts with DDX4, PIWIL1, RANBP9 and TDRD1.

Its subcellular location is the cytoplasm. In terms of biological role, plays a central role during spermatogenesis by repressing transposable elements and preventing their mobilization, which is essential for the germline integrity. Acts via the piRNA metabolic process, which mediates the repression of transposable elements during meiosis by forming complexes composed of piRNAs and Piwi proteins and governs the methylation and subsequent repression of transposons. Its association with pi-bodies suggests a participation in the primary piRNAs metabolic process. Required prior to the pachytene stage to facilitate the production of multiple types of piRNAs, including those associated with repeats involved in the regulation of retrotransposons. May act by mediating protein-protein interactions during germ cell maturation. This chain is Ankyrin repeat, SAM and basic leucine zipper domain-containing protein 1 (ASZ1), found in Rhinolophus ferrumequinum (Greater horseshoe bat).